We begin with the raw amino-acid sequence, 541 residues long: 2-isopropylmalate synthase (541 aa).

Residues 8–284 (VIIFDTTLRD…LTNINTRHIY (277 aa)) form the Pyruvate carboxyltransferase domain. Residues Asp-17, His-208, His-210, and Asn-244 each coordinate Mn(2+). Residues 408-541 (RLELVQVSCG…DQPTEVVAGS (134 aa)) are regulatory domain.

This sequence belongs to the alpha-IPM synthase/homocitrate synthase family. LeuA type 1 subfamily. Homodimer. Requires Mn(2+) as cofactor.

It localises to the cytoplasm. The catalysed reaction is 3-methyl-2-oxobutanoate + acetyl-CoA + H2O = (2S)-2-isopropylmalate + CoA + H(+). It functions in the pathway amino-acid biosynthesis; L-leucine biosynthesis; L-leucine from 3-methyl-2-oxobutanoate: step 1/4. Functionally, catalyzes the condensation of the acetyl group of acetyl-CoA with 3-methyl-2-oxobutanoate (2-ketoisovalerate) to form 3-carboxy-3-hydroxy-4-methylpentanoate (2-isopropylmalate). In Trichodesmium erythraeum (strain IMS101), this protein is 2-isopropylmalate synthase.